Reading from the N-terminus, the 241-residue chain is GDSL esterase/lipase At5g45920 (241 aa).

The Nucleophile role is filled by Ser-12. Active-site residues include Asp-189 and His-192.

Belongs to the 'GDSL' lipolytic enzyme family.

This chain is GDSL esterase/lipase At5g45920, found in Arabidopsis thaliana (Mouse-ear cress).